The following is a 147-amino-acid chain: DNA polymerase epsilon subunit 3 (147 aa).

An N-acetylalanine modification is found at A2. At T83 the chain carries Phosphothreonine. Residues 85 to 146 (LKEALEAYRR…EEQNEEEEVD (62 aa)) are a coiled coil. The span at 93 to 124 (RREQKGKKEASEQKKKDKDKKTDSEEQDKSRD) shows a compositional bias: basic and acidic residues. Residues 93 to 147 (RREQKGKKEASEQKKKDKDKKTDSEEQDKSRDEDNDEDEERLEEEEQNEEEEVDN) form a disordered region. S122 bears the Phosphoserine mark. Residues 125 to 147 (EDNDEDEERLEEEEQNEEEEVDN) are compositionally biased toward acidic residues.

Component of the DNA polymerase epsilon complex consisting of four subunits: the catalytic subunit POLE and the accessory subunits POLE2, POLE3 and POLE4. Interaction with POLE4 is a prerequisite for further binding with POLE and POLE2. Heterodimer with CHRAC1; binds to DNA. Component of the CHRAC ISWI chromatin remodeling complex at least composed of SMARCA5/SNF2H, BAZ1A/ACF1, CHRAC1 and POLE3; the complex preferentially binds DNA through the CHRAC1-POLE3 heterodimer and possesses ATP-dependent nucleosome-remodeling activity. Within the complex, the heterodimer with CHRAC1 interacts with SMARCA5/SNF2H; the interaction is direct and enhances nucleosome sliding activity by the SMARCA5/SNF2H and BAZ1A/ACF1 interaction. Within the complex, the heterodimer with CHRAC1 interacts with BAZ1A/ACF1; the interactions are direct.

Its subcellular location is the nucleus. In terms of biological role, accessory component of the DNA polymerase epsilon complex. Participates in DNA repair and in chromosomal DNA replication. Forms a complex with CHRAC1 and binds naked DNA, which is then incorporated into chromatin, aided by the nucleosome-remodeling activity of ISWI/SNF2H and ACF1. Does not enhance nucleosome sliding activity of the ACF-5 ISWI chromatin remodeling complex. This chain is DNA polymerase epsilon subunit 3 (POLE3), found in Bos taurus (Bovine).